A 493-amino-acid chain; its full sequence is Vacuolar-processing enzyme (493 aa).

Residues 1–34 form the signal peptide; it reads MAVHRSLLNKPTWCRVAFWWWMLVMVMRIQGTNG. The propeptide occupies 35–53; it reads KEQDSVIKLPTQEVDAESD. H176 is an active-site residue. The active-site Nucleophile is the C218. C251 and C265 form a disulfide bridge. N318 carries an N-linked (GlcNAc...) asparagine glycan. Disulfide bonds link C429–C459 and C441–C476.

This sequence belongs to the peptidase C13 family.

Asparagine-specific endopeptidase involved in the processing of vacuolar seed protein precursors into the mature forms. The chain is Vacuolar-processing enzyme from Phaseolus vulgaris (Kidney bean).